A 474-amino-acid chain; its full sequence is PTS system N-acetylmuramic acid-specific EIIBC component (474 aa).

One can recognise a PTS EIIB type-1 domain in the interval 1–89 (MAKEISSELL…SELLGEAPVQ (89 aa)). Over 1–123 (MAKEISSELL…LAKFATIFTP (123 aa)) the chain is Cytoplasmic. The active-site Phosphocysteine intermediate; for EIIB activity is the Cys-29. One can recognise a PTS EIIC type-1 domain in the interval 115–474 (AKFATIFTPL…LFGCRNVNLD (360 aa)). A helical membrane pass occupies residues 124-144 (LIPGFIAAGLLLGIATLIATV). Over 145–157 (MHVPADAQGTLPD) the chain is Periplasmic. The helical transmembrane segment at 158-178 (ALNFMKVFSKGLFTFLVILVG) threads the bilayer. At 179-180 (YN) the chain is on the cytoplasmic side. Residues 181–201 (AAQAFGGTGVNGAIIAALFLL) form a helical membrane-spanning segment. Residues 202 to 217 (GYNPAATTGYYAGFHD) lie on the Periplasmic side of the membrane. Residues 218 to 238 (FFGLPIDPRGNIIGVLIAAWA) form a helical membrane-spanning segment. At 239–260 (CARIEGMVRRFMPDDLDMLLTS) the chain is on the cytoplasmic side. A helical membrane pass occupies residues 261 to 281 (LITLLITATLAYLIIMPLGGW). Topologically, residues 282-301 (LFEGMSWLFMHLNSNPFGCA) are periplasmic. The helical transmembrane segment at 302–322 (VLAGLFLIAVVFGVHQGFIPV) threads the bilayer. Over 323-334 (YLALMDSQGFNS) the chain is Cytoplasmic. A helical transmembrane segment spans residues 335–355 (LFPILSMAGAGQVGAALALYW). The Periplasmic portion of the chain corresponds to 356–368 (RAQPHSALRSQVR). A helical transmembrane segment spans residues 369-389 (GAIIPGLLGVGEPLIYGVTLP). Residues 390 to 393 (RMKP) lie on the Cytoplasmic side of the membrane. A helical transmembrane segment spans residues 394–414 (FVTACLGGAAGGLFIGLIAWW). Topologically, residues 415 to 440 (GLPMGLNSAFGPSGLVALPLMTSAQG) are periplasmic. The chain crosses the membrane as a helical span at residues 441–461 (ILPAMAVYAGGILVAWVCGFI). Topologically, residues 462–474 (FTTLFGCRNVNLD) are cytoplasmic.

The protein resides in the cell inner membrane. It carries out the reaction N-acetyl-beta-D-muramate(out) + N(pros)-phospho-L-histidyl-[protein] = N-acetyl-beta-D-muramate 6-phosphate(in) + L-histidyl-[protein]. Its function is as follows. The phosphoenolpyruvate-dependent sugar phosphotransferase system (sugar PTS), a major carbohydrate active transport system, catalyzes the phosphorylation of incoming sugar substrates concomitantly with their translocation across the cell membrane. This system is involved in N-acetylmuramic acid (MurNAc) transport, yielding cytoplasmic MurNAc-6-P. Is responsible for growth on MurNAc as the sole source of carbon and energy. Is also able to take up anhydro-N-acetylmuramic acid (anhMurNAc), but cannot phosphorylate the carbon 6, probably because of the 1,6-anhydro ring. The protein is PTS system N-acetylmuramic acid-specific EIIBC component (murP) of Escherichia coli (strain K12).